Reading from the N-terminus, the 222-residue chain is 26S proteasome non-ATPase regulatory subunit 9 (222 aa).

Residues 108-194 enclose the PDZ domain; the sequence is QARDMAEARE…KPLNVMVIRR (87 aa). S128 is subject to Phosphoserine.

It belongs to the proteasome subunit p27 family. Interacts with PSMC3. Part of a transient complex (modulator) containing PSMD9, PSMC6 and PSMC3 formed during the assembly of the 26S proteasome.

In terms of biological role, acts as a chaperone during the assembly of the 26S proteasome, specifically of the base subcomplex of the PA700/19S regulatory complex (RC). During the base subcomplex assembly is part of an intermediate PSMD9:PSMC6:PSMC3 module, also known as modulator trimer complex; PSMD9 is released during the further base assembly process. The sequence is that of 26S proteasome non-ATPase regulatory subunit 9 (Psmd9) from Rattus norvegicus (Rat).